Reading from the N-terminus, the 803-residue chain is Translation initiation factor IF-2 (803 aa).

Disordered stretches follow at residues 95–125 (PVVEQKRETEPAPTQEVPLTSDTTNLNEKAE) and 138–178 (EVKE…EREE). Residues 111-121 (VPLTSDTTNLN) show a composition bias toward polar residues. A compositionally biased stretch (basic and acidic residues) spans 138 to 155 (EVKEEAKKTPSEKKETPK). Over residues 156–167 (KGPRKETRRSRK) the composition is skewed to basic residues. Over residues 168 to 178 (PDKEDKWEREE) the composition is skewed to basic and acidic residues. In terms of domain architecture, tr-type G spans 302–471 (PRAPVVTIMG…LLQAEVLELK (170 aa)). Residues 311–318 (GHVDHGKT) are G1. 311-318 (GHVDHGKT) provides a ligand contact to GTP. Positions 336-340 (GITQH) are G2. The G3 stretch occupies residues 357–360 (DTPG). Residues 357-361 (DTPGH) and 411-414 (NKID) each bind GTP. The interval 411–414 (NKID) is G4. A G5 region spans residues 447-449 (SAK).

This sequence belongs to the TRAFAC class translation factor GTPase superfamily. Classic translation factor GTPase family. IF-2 subfamily.

The protein resides in the cytoplasm. Functionally, one of the essential components for the initiation of protein synthesis. Protects formylmethionyl-tRNA from spontaneous hydrolysis and promotes its binding to the 30S ribosomal subunits. Also involved in the hydrolysis of GTP during the formation of the 70S ribosomal complex. This chain is Translation initiation factor IF-2, found in Coxiella burnetii (strain Dugway 5J108-111).